The primary structure comprises 700 residues: GCTDVLCCVIFVIVILGYIVLGTVAWMHGDPRKVVYPTDSYGQFCGQQETPNANKAILFYFNILQCANPSVLINLQCPTTQLCVSKCPDRFATYIDMQYSYRRNKGSWEYYKQFCKPGFNNPDKPISQVLRDEDCPSMIVPSRPFLQRCFPDFITRNGTLTVANQTSFKDGHGKIRSVVDLRDAANGITSLLDAKEVGTKIFEDYASSWFWILIGLVISMLVSLVFILLLRFTAGVLFWLVIFGVIAAVGYGIWHCYWEYSSLKGKPDSDVTISDIGFQTDFRVYLQLSQTWLIFMTSLAVIEAIIILVLIFLRNRVRIAIALLKEGSKAIGCIMSTLFYPIITFLLLALCIAYWAVTAVFLASSGEAVYKVMSTLPDCKYTNLTCDPETFSQSNVTKLCPGSQCTFAFYGGESLYHRYIFVLQLCNLLVFLWLVNFTIALGQCTLAGAFAAYYWALRKPADIPPCPLASSFGRALRYHTGSLAFGALILSIVQFIRIILEYLDHKLKGAHNAFTRFLLCCLKCCFWCLEHFIKFMNRNAYIMISIYGKNFCTSARDAFFLLMRNVMRVAVLDKVTDFLLFLGKLLISGSVGVLAFFFFTRQIPVIQEEVPSLNYYWVPLLTVIFGSYMIAHGFFNVYAMCVDTLFLCFLLDLEKNDGSATRPYYMCSSLRAILNKKNQKRPKETKRGRKQKKEQPKSRH.

The Cytoplasmic segment spans residues 1-4 (GCTD). Residues 5–25 (VLCCVIFVIVILGYIVLGTVA) traverse the membrane as a helical segment. The Extracellular portion of the chain corresponds to 26 to 209 (WMHGDPRKVV…KIFEDYASSW (184 aa)). N-linked (GlcNAc...) asparagine glycans are attached at residues Asn-157 and Asn-164. The helical transmembrane segment at 210 to 230 (FWILIGLVISMLVSLVFILLL) threads the bilayer. Residues 231-233 (RFT) lie on the Cytoplasmic side of the membrane. The chain crosses the membrane as a helical span at residues 234–254 (AGVLFWLVIFGVIAAVGYGIW). At 255 to 292 (HCYWEYSSLKGKPDSDVTISDIGFQTDFRVYLQLSQTW) the chain is on the extracellular side. The helical transmembrane segment at 293 to 313 (LIFMTSLAVIEAIIILVLIFL) threads the bilayer. Residues 314-341 (RNRVRIAIALLKEGSKAIGCIMSTLFYP) lie on the Cytoplasmic side of the membrane. Residues 342 to 362 (IITFLLLALCIAYWAVTAVFL) traverse the membrane as a helical segment. Topologically, residues 363–432 (ASSGEAVYKV…LQLCNLLVFL (70 aa)) are extracellular. Asn-383 and Asn-395 each carry an N-linked (GlcNAc...) asparagine glycan. Residues 433 to 455 (WLVNFTIALGQCTLAGAFAAYYW) traverse the membrane as a helical segment. The Cytoplasmic portion of the chain corresponds to 456–482 (ALRKPADIPPCPLASSFGRALRYHTGS). The helical transmembrane segment at 483–503 (LAFGALILSIVQFIRIILEYL) threads the bilayer. The Extracellular segment spans residues 504–541 (DHKLKGAHNAFTRFLLCCLKCCFWCLEHFIKFMNRNAY). Residues 542–562 (IMISIYGKNFCTSARDAFFLL) form a helical membrane-spanning segment. Residues 563–577 (MRNVMRVAVLDKVTD) are Cytoplasmic-facing. Residues 578-598 (FLLFLGKLLISGSVGVLAFFF) form a helical membrane-spanning segment. Residues 599-616 (FTRQIPVIQEEVPSLNYY) are Extracellular-facing. Residues 617–637 (WVPLLTVIFGSYMIAHGFFNV) traverse the membrane as a helical segment. Topologically, residues 638–687 (YAMCVDTLFLCFLLDLEKNDGSATRPYYMCSSLRAILNKKNQKRPKETKR) are cytoplasmic. The interval 676–700 (KKNQKRPKETKRGRKQKKEQPKSRH) is disordered. Residues 677 to 692 (KNQKRPKETKRGRKQK) show a composition bias toward basic residues.

The protein belongs to the CTL (choline transporter-like) family.

The protein resides in the cell membrane. It catalyses the reaction choline(out) + n H(+)(in) = choline(in) + n H(+)(out). In terms of biological role, choline/H+ antiporter. The protein is Choline transporter-like protein 5-B (slc44a5b) of Danio rerio (Zebrafish).